Consider the following 137-residue polypeptide: Flavodoxin (137 aa).

The region spanning 2 to 137 (VEIVYWSGTG…KELGEAAAKA (136 aa)) is the Flavodoxin-like domain.

Belongs to the flavodoxin family. Requires FMN as cofactor.

In terms of biological role, low-potential electron donor to a number of redox enzymes. The chain is Flavodoxin from Megasphaera elsdenii.